The following is a 156-amino-acid chain: tRNA (cytidine(34)-2'-O)-methyltransferase (156 aa).

S-adenosyl-L-methionine contacts are provided by glycine 102, leucine 124, and serine 132.

It belongs to the class IV-like SAM-binding methyltransferase superfamily. RNA methyltransferase TrmH family. TrmL subfamily. Homodimer.

It is found in the cytoplasm. The enzyme catalyses cytidine(34) in tRNA + S-adenosyl-L-methionine = 2'-O-methylcytidine(34) in tRNA + S-adenosyl-L-homocysteine + H(+). It catalyses the reaction 5-carboxymethylaminomethyluridine(34) in tRNA(Leu) + S-adenosyl-L-methionine = 5-carboxymethylaminomethyl-2'-O-methyluridine(34) in tRNA(Leu) + S-adenosyl-L-homocysteine + H(+). Methylates the ribose at the nucleotide 34 wobble position in the two leucyl isoacceptors tRNA(Leu)(CmAA) and tRNA(Leu)(cmnm5UmAA). Catalyzes the methyl transfer from S-adenosyl-L-methionine to the 2'-OH of the wobble nucleotide. The protein is tRNA (cytidine(34)-2'-O)-methyltransferase of Burkholderia cenocepacia (strain HI2424).